Here is a 257-residue protein sequence, read N- to C-terminus: Ribonuclease PH (257 aa).

Phosphate-binding positions include R87 and G125–R127.

This sequence belongs to the RNase PH family. Homohexameric ring arranged as a trimer of dimers.

The enzyme catalyses tRNA(n+1) + phosphate = tRNA(n) + a ribonucleoside 5'-diphosphate. Phosphorolytic 3'-5' exoribonuclease that plays an important role in tRNA 3'-end maturation. Removes nucleotide residues following the 3'-CCA terminus of tRNAs; can also add nucleotides to the ends of RNA molecules by using nucleoside diphosphates as substrates, but this may not be physiologically important. Probably plays a role in initiation of 16S rRNA degradation (leading to ribosome degradation) during starvation. The sequence is that of Ribonuclease PH from Geobacillus kaustophilus (strain HTA426).